The chain runs to 115 residues: Large ribosomal subunit protein uL22 (115 aa).

Belongs to the universal ribosomal protein uL22 family. Part of the 50S ribosomal subunit.

Its function is as follows. This protein binds specifically to 23S rRNA; its binding is stimulated by other ribosomal proteins, e.g. L4, L17, and L20. It is important during the early stages of 50S assembly. It makes multiple contacts with different domains of the 23S rRNA in the assembled 50S subunit and ribosome. In terms of biological role, the globular domain of the protein is located near the polypeptide exit tunnel on the outside of the subunit, while an extended beta-hairpin is found that lines the wall of the exit tunnel in the center of the 70S ribosome. The polypeptide is Large ribosomal subunit protein uL22 (Nitrosospira multiformis (strain ATCC 25196 / NCIMB 11849 / C 71)).